A 532-amino-acid polypeptide reads, in one-letter code: Tyrosinase (532 aa).

The first 22 residues, 1–22 (MESTTVLLAASTLLLVLHASYG), serve as a signal peptide directing secretion. The Lumenal, melanosome segment spans residues 23–479 (QFPRACSTAQ…LEQARQIWQW (457 aa)). N-linked (GlcNAc...) asparagine glycosylation is found at N90, N115, and N165. Cu cation-binding residues include H184, H206, and H215. 2 N-linked (GlcNAc...) asparagine glycosylation sites follow: N234 and N341. Cu cation-binding residues include H367 and H371. N375 carries an N-linked (GlcNAc...) asparagine glycan. H394 lines the Cu cation pocket. A helical transmembrane segment spans residues 480-500 (LLGAAVVGGLVTAVIATIISL). Residues 501–532 (TCRRKRRTKTSEETRPLLMEAEDYHATYQSNL) lie on the Cytoplasmic side of the membrane.

The protein belongs to the tyrosinase family. In terms of assembly, active tyrosinase has been found as a homodimer and homotetramer. The cofactor is Cu(2+). In terms of tissue distribution, frog skin.

It localises to the melanosome membrane. The enzyme catalyses 2 L-dopa + O2 = 2 L-dopaquinone + 2 H2O. It catalyses the reaction L-tyrosine + O2 = L-dopaquinone + H2O. Its activity is regulated as follows. Activated by trypsin, chymotrypsin and subtilisin. Activated by alpha-chymotrypsin, thermolysin and Pronase. Inhibited by its product L-DOPA and tyrosine. This is a copper-containing oxidase that functions in the formation of pigments such as melanins and other polyphenolic compounds. Catalyzes the initial and rate limiting step in the cascade of reactions leading to melanin production from tyrosine. In addition to hydroxylating tyrosine to DOPA (3,4-dihydroxyphenylalanine), also catalyzes the oxidation of DOPA to DOPA-quinone. The sequence is that of Tyrosinase from Pelophylax lessonae (Pool frog).